Consider the following 193-residue polypeptide: NADH-quinone oxidoreductase subunit B (193 aa).

Residues C72, C73, C137, and C167 each coordinate [4Fe-4S] cluster.

Belongs to the complex I 20 kDa subunit family. NDH-1 is composed of 14 different subunits. Subunits NuoB, C, D, E, F, and G constitute the peripheral sector of the complex. [4Fe-4S] cluster serves as cofactor.

It is found in the cell inner membrane. The enzyme catalyses a quinone + NADH + 5 H(+)(in) = a quinol + NAD(+) + 4 H(+)(out). NDH-1 shuttles electrons from NADH, via FMN and iron-sulfur (Fe-S) centers, to quinones in the respiratory chain. The immediate electron acceptor for the enzyme in this species is believed to be ubiquinone. Couples the redox reaction to proton translocation (for every two electrons transferred, four hydrogen ions are translocated across the cytoplasmic membrane), and thus conserves the redox energy in a proton gradient. This chain is NADH-quinone oxidoreductase subunit B, found in Caulobacter vibrioides (strain ATCC 19089 / CIP 103742 / CB 15) (Caulobacter crescentus).